A 506-amino-acid chain; its full sequence is Lysine--tRNA ligase (506 aa).

Mg(2+) is bound by residues Glu411 and Glu418.

It belongs to the class-II aminoacyl-tRNA synthetase family. Homodimer. The cofactor is Mg(2+).

It is found in the cytoplasm. The enzyme catalyses tRNA(Lys) + L-lysine + ATP = L-lysyl-tRNA(Lys) + AMP + diphosphate. This chain is Lysine--tRNA ligase, found in Thermosynechococcus vestitus (strain NIES-2133 / IAM M-273 / BP-1).